The primary structure comprises 361 residues: Cdc42 effector protein 1 (361 aa).

The disordered stretch occupies residues 1 to 29 (MPGPQGAGGAPAMNLGKLSPVGWVSSSQG). 2 positions are modified to phosphoserine: S19 and S27. At T34 the chain carries Phosphothreonine. The 15-residue stretch at 38–52 (ISPPLGDFRHTMHVG) folds into the CRIB domain. S39 is modified (phosphoserine). R53 is modified (omega-N-methylarginine). A phosphoserine mark is found at S65, S73, S77, S101, S113, S121, S139, S180, S190, S192, and S195. The tract at residues 161 to 186 (CTISRLPRPEKPRDRDRDSSFPAEPE) is disordered. The segment covering 167-186 (PRPEKPRDRDRDSSFPAEPE) has biased composition (basic and acidic residues). Disordered regions lie at residues 218 to 300 (EGSA…SRHH) and 320 to 361 (SWGS…EVKV). 4 repeat units span residues 220–226 (SAAETPA), 229–235 (PAASPPA), 236–242 (SVANPPA), and 243–249 (PASSPSL). The 4 X 7 AA tandem repeats of [PT]-[AT]-A-[ENT]-[PT]-[PTS]-[AG] stretch occupies residues 220–249 (SAAETPAPAPAASPPASVANPPAPASSPSL). S270, S320, and S323 each carry phosphoserine. Polar residues predominate over residues 332-347 (QAGSRTPVPSTVQANT). The segment covering 351-361 (ADAEEDDEVKV) has biased composition (acidic residues).

Belongs to the BORG/CEP family. Interacts with RHOQ and CDC42, in a GTP-dependent manner.

Its subcellular location is the endomembrane system. The protein localises to the cytoplasm. The protein resides in the cytoskeleton. Its function is as follows. Probably involved in the organization of the actin cytoskeleton. Induced membrane extensions in fibroblasts. In Bos taurus (Bovine), this protein is Cdc42 effector protein 1.